The following is a 236-amino-acid chain: Phosphoribosylaminoimidazole-succinocarboxamide synthase (236 aa).

It belongs to the SAICAR synthetase family.

The catalysed reaction is 5-amino-1-(5-phospho-D-ribosyl)imidazole-4-carboxylate + L-aspartate + ATP = (2S)-2-[5-amino-1-(5-phospho-beta-D-ribosyl)imidazole-4-carboxamido]succinate + ADP + phosphate + 2 H(+). Its pathway is purine metabolism; IMP biosynthesis via de novo pathway; 5-amino-1-(5-phospho-D-ribosyl)imidazole-4-carboxamide from 5-amino-1-(5-phospho-D-ribosyl)imidazole-4-carboxylate: step 1/2. The sequence is that of Phosphoribosylaminoimidazole-succinocarboxamide synthase from Pseudomonas syringae pv. syringae (strain B728a).